Reading from the N-terminus, the 330-residue chain is tRNA U34 carboxymethyltransferase (330 aa).

Carboxy-S-adenosyl-L-methionine is bound by residues lysine 91, tryptophan 105, lysine 110, glycine 130, 152–154 (DPS), 181–182 (IE), methionine 196, tyrosine 200, and arginine 315.

Belongs to the class I-like SAM-binding methyltransferase superfamily. CmoB family. As to quaternary structure, homotetramer.

It catalyses the reaction carboxy-S-adenosyl-L-methionine + 5-hydroxyuridine(34) in tRNA = 5-carboxymethoxyuridine(34) in tRNA + S-adenosyl-L-homocysteine + H(+). In terms of biological role, catalyzes carboxymethyl transfer from carboxy-S-adenosyl-L-methionine (Cx-SAM) to 5-hydroxyuridine (ho5U) to form 5-carboxymethoxyuridine (cmo5U) at position 34 in tRNAs. In Shewanella halifaxensis (strain HAW-EB4), this protein is tRNA U34 carboxymethyltransferase.